The sequence spans 380 residues: Cytochrome b (380 aa).

The next 4 helical transmembrane spans lie at 34–54 (FGSL…LLAM), 78–99 (WLIR…FLHI), 114–134 (WNTG…GYVL), and 179–199 (FFAL…IHLT). Heme b-binding residues include histidine 84 and histidine 98. Heme b is bound by residues histidine 183 and histidine 197. Residue histidine 202 coordinates a ubiquinone. 4 helical membrane-spanning segments follow: residues 227–247 (IKDI…ALFS), 289–309 (LGGV…PFLH), 321–341 (LSQT…WIGS), and 348–368 (FIII…ILFP).

This sequence belongs to the cytochrome b family. In terms of assembly, the cytochrome bc1 complex contains 11 subunits: 3 respiratory subunits (MT-CYB, CYC1 and UQCRFS1), 2 core proteins (UQCRC1 and UQCRC2) and 6 low-molecular weight proteins (UQCRH/QCR6, UQCRB/QCR7, UQCRQ/QCR8, UQCR10/QCR9, UQCR11/QCR10 and a cleavage product of UQCRFS1). This cytochrome bc1 complex then forms a dimer. It depends on heme b as a cofactor.

The protein resides in the mitochondrion inner membrane. Component of the ubiquinol-cytochrome c reductase complex (complex III or cytochrome b-c1 complex) that is part of the mitochondrial respiratory chain. The b-c1 complex mediates electron transfer from ubiquinol to cytochrome c. Contributes to the generation of a proton gradient across the mitochondrial membrane that is then used for ATP synthesis. The polypeptide is Cytochrome b (MT-CYB) (Coturnix japonica (Japanese quail)).